The chain runs to 151 residues: Ubiquitin-conjugating enzyme E2 W (151 aa).

M1 is covalently cross-linked (Peptide (Met-Gly) (interchain with G-Cter in ubiquitin)). The 149-residue stretch at 3–151 folds into the UBC core domain; sequence SMQKRLQKEL…TKWWYHDDTC (149 aa). C91 serves as the catalytic Glycyl thioester intermediate.

The protein belongs to the ubiquitin-conjugating enzyme family. As to quaternary structure, homodimer. Interacts with FANCL. Interacts with STUB1/CHIP. Post-translationally, ubiquitinated in vitro in the presence of FANCL. Autoubiquitinated at Met-1.

It localises to the nucleus. It catalyses the reaction S-ubiquitinyl-[E1 ubiquitin-activating enzyme]-L-cysteine + [E2 ubiquitin-conjugating enzyme]-L-cysteine = [E1 ubiquitin-activating enzyme]-L-cysteine + S-ubiquitinyl-[E2 ubiquitin-conjugating enzyme]-L-cysteine.. It carries out the reaction S-ubiquitinyl-[E1 ubiquitin-activating enzyme]-L-cysteine + [acceptor protein]-N-terminal-amino acid = [E1 ubiquitin-activating enzyme]-L-cysteine + N-terminal-ubiquitinyl-[acceptor protein].. It functions in the pathway protein modification; protein ubiquitination. Its function is as follows. Accepts ubiquitin from the E1 complex and catalyzes its covalent attachment to other proteins. Specifically monoubiquitinates the N-terminus of various substrates, including ATXN3, MAPT/TAU, POLR2H/RPB8 and STUB1/CHIP, by recognizing backbone atoms of disordered N-termini. Involved in degradation of misfolded chaperone substrates by mediating monoubiquitination of STUB1/CHIP, leading to recruitment of ATXN3 to monoubiquitinated STUB1/CHIP, and restriction of the length of ubiquitin chain attached to STUB1/CHIP substrates by ATXN3. After UV irradiation, but not after mitomycin-C (MMC) treatment, acts as a specific E2 ubiquitin-conjugating enzyme for the Fanconi anemia complex by associating with E3 ubiquitin-protein ligase FANCL and catalyzing monoubiquitination of FANCD2, a key step in the DNA damage pathway. In vitro catalyzes 'Lys-11'-linked polyubiquitination. UBE2W-catalyzed ubiquitination also occurs in the presence of inactive RING/U-box type E3s, i.e. lacking the active site cysteine residues to form thioester bonds with ubiquitin, or even in the absence of E3, albeit at a slower rate. This chain is Ubiquitin-conjugating enzyme E2 W (UBE2W), found in Bos taurus (Bovine).